Here is a 732-residue protein sequence, read N- to C-terminus: Acylamino-acid-releasing enzyme (732 aa).

Met-1 is subject to Blocked amino end (Met); alternate. Met-1 carries the N-acetylmethionine; alternate modification. Phosphoserine occurs at positions 185 and 187. Residues Ser-587, Asp-675, and His-707 each act as charge relay system in the active site.

It belongs to the peptidase S9C family. In terms of assembly, homotetramer.

It is found in the cytoplasm. The catalysed reaction is Cleavage of an N-acetyl or N-formyl amino acid from the N-terminus of a polypeptide.. With respect to regulation, homotetramerization is required for activity. Tetramerization results in the formation of a gated channel which is involved in substrate selection and substrate access to the catalytic sites. This enzyme catalyzes the hydrolysis of the N-terminal peptide bond of an N-acetylated peptide to generate an N-acetylated amino acid and a peptide with a free N-terminus. It preferentially cleaves off Ac-Ala, Ac-Met and Ac-Ser. Also, involved in the degradation of oxidized and glycated proteins. This is Acylamino-acid-releasing enzyme (Apeh) from Rattus norvegicus (Rat).